A 262-amino-acid chain; its full sequence is Small ribosomal subunit protein uS2 (262 aa).

The protein belongs to the universal ribosomal protein uS2 family.

This is Small ribosomal subunit protein uS2 from Azobacteroides pseudotrichonymphae genomovar. CFP2.